The sequence spans 1378 residues: Attractin-like protein 1 (1378 aa).

The first 51 residues, 1 to 51 (MEPGVRARSGAPQPASPVLWRARPAGGGGASSWLLLDGNSWLLCYGFLYLA), serve as a signal peptide directing secretion. An EGF-like 1 domain is found at 52 to 90 (LYAQVSQSKPCERTGSCFSGRCVNSTCLCDPGWVGDQCQ). Over 52–1229 (LYAQVSQSKP…FSQHNTIMDL (1178 aa)) the chain is Extracellular. 3 disulfide bridges follow: C62/C78, C80/C89, and C92/C118. N-linked (GlcNAc...) asparagine glycosylation is present at N75. The CUB domain occupies 92 to 208 (CQGRFKLTEP…TGFNIFYSIN (117 aa)). Residues N173 and N197 are each glycosylated (N-linked (GlcNAc...) asparagine). Residues 206-244 (SINSCPNNCSGHGKCTTSVSVASQVYCECDKYWKGEACD) form the EGF-like 2 domain. Disulfide bonds link C210–C220, C214–C232, and C234–C243. Kelch repeat units follow at residues 315–364 (FMWV…LYQE), 366–414 (IFMY…EGHS), 426–474 (VMIV…SVYD), 479–530 (SIYV…LING), 532–590 (MLIF…VING), and 591–637 (SMYI…WNKN). An N-linked (GlcNAc...) asparagine glycan is attached at N379. PSI domains follow at residues 613 to 656 (NCKA…AKCP), 665 to 708 (RCYR…TKCH), and 714 to 759 (ICNK…DACL). N703 is a glycosylation site (N-linked (GlcNAc...) asparagine). Positions 754–872 (VGDACLRINS…TSMADGLVCE (119 aa)) constitute a C-type lectin domain. An intrachain disulfide couples C775 to C871. Residues N777 and N897 are each glycosylated (N-linked (GlcNAc...) asparagine). PSI domains lie at 888–938 (PCSL…ATCS) and 941–1011 (NCSG…IQCP). Intrachain disulfides connect C1013–C1021, C1015–C1027, C1030–C1039, C1042–C1056, C1059–C1068, C1061–C1075, C1077–C1087, and C1090–C1105. 2 Laminin EGF-like domains span residues 1013–1058 (CQCN…QCTA) and 1059–1107 (CTCG…TCYY). N1156 is a glycosylation site (N-linked (GlcNAc...) asparagine). Residues 1230-1250 (VQFFVTFFSCFLSLLLVAAVV) traverse the membrane as a helical segment. The Cytoplasmic segment spans residues 1251–1378 (WKIKQTCWAS…HLSTRQGTCV (128 aa)). Residues 1287–1324 (VGAEQTDFLRGPLEGAPKPIAIEPCAGNRAAVLTVFLC) are interaction with MC4R. The tract at residues 1351–1378 (QQKPSDNKDKTSGVRNRKHLSTRQGTCV) is disordered.

In terms of assembly, interacts with MC4R. As to expression, highly expressed in brain, heart, lung, kidney and liver. In the central nervous system, it is highly expressed in the dentate gyrus, CA1-3 regions of the hippocampus, and the ventral taenia tecta.

The protein resides in the cell membrane. May play a role in melanocortin signaling pathways that regulate energy homeostasis. This is Attractin-like protein 1 (Atrnl1) from Mus musculus (Mouse).